The primary structure comprises 132 residues: Spermatogenesis-associated protein 33 (132 aa).

The interval 1–60 (MGQSKSKPREKKEEEKSTTTLVTKSKEKVMEKEAKQSDKESQPAESLLFATSKHSRPSSS) is interaction with ATG16L1. The disordered stretch occupies residues 1–81 (MGQSKSKPRE…SKKRSVIPQI (81 aa)). The span at 24-42 (KSKEKVMEKEAKQSDKESQ) shows a compositional bias: basic and acidic residues. Residues 61–132 (SEDKPETKQR…IAAYDVHNTE (72 aa)) form an interaction with VDAC2 region. The PQIIIT motif lies at 79-84 (PQIIIT). At Ser-87 the chain carries Phosphoserine. A disordered region spans residues 110–132 (DWGPYHRHRSPSTIAAYDVHNTE).

As to quaternary structure, interacts (via PQIIIT motif) with PPP3R2 and PPP3CC. Interacts with VDAC2. Interacts with ATG16L1 (via WD repeats). Interacts with PPP3R1, PPP3CA and PPP3CB. Predominantly expressed in the testis (at protein level). Expressed in the sperm midpiece (at protein level).

It localises to the cytoplasm. The protein resides in the cytosol. It is found in the nucleus. The protein localises to the mitochondrion. Plays an important role in sperm motility and male fertility. Required for sperm midpiece flexibility and for the localization of sperm calcineurin to the mitochondria. Promotes mitophagy as well as acts as an autophagy mediator in male germline cells. Links damaged mitochondria to autophagosomes via its binding to the outer mitochondrial membrane protein VDAC2, as well as to key autophagy machinery component ATG16L1. This chain is Spermatogenesis-associated protein 33 (Spata33), found in Mus musculus (Mouse).